The sequence spans 556 residues: Polypeptide N-acetylgalactosaminyltransferase 13 (556 aa).

At 1-4 (MRRL) the chain is on the cytoplasmic side. The chain crosses the membrane as a helical; Signal-anchor for type II membrane protein span at residues 5–27 (VYCKVVLATSLMWVLVDVFLLLY). The Lumenal segment spans residues 28 to 556 (FSECNKCDDK…WLLRNMTLGT (529 aa)). N94 and N116 each carry an N-linked (GlcNAc...) asparagine glycan. 5 disulfide bridges follow: C105–C338, C329–C407, C441–C458, C481–C496, and C522–C539. The interval 114-224 (LPNTSVVIVF…LGWLEPLLAR (111 aa)) is catalytic subdomain A. Substrate is bound by residues D155 and R185. Mn(2+)-binding residues include D208 and H210. The segment at 284 to 346 (PVRTPTMAGG…TCSHVGHVFR (63 aa)) is catalytic subdomain B. A substrate-binding site is contributed by W315. H343 serves as a coordination point for Mn(2+). The substrate site is built by R346 and Y351. Positions 428-550 (YSLGEIRNVE…GSRSQQWLLR (123 aa)) constitute a Ricin B-type lectin domain. N551 is a glycosylation site (N-linked (GlcNAc...) asparagine).

It belongs to the glycosyltransferase 2 family. GalNAc-T subfamily. Mn(2+) serves as cofactor.

It localises to the golgi apparatus membrane. It catalyses the reaction L-seryl-[protein] + UDP-N-acetyl-alpha-D-galactosamine = a 3-O-[N-acetyl-alpha-D-galactosaminyl]-L-seryl-[protein] + UDP + H(+). It carries out the reaction L-threonyl-[protein] + UDP-N-acetyl-alpha-D-galactosamine = a 3-O-[N-acetyl-alpha-D-galactosaminyl]-L-threonyl-[protein] + UDP + H(+). The protein operates within protein modification; protein glycosylation. In terms of biological role, catalyzes the initial reaction in O-linked oligosaccharide biosynthesis, the transfer of an N-acetyl-D-galactosamine (GalNAc) residue from UDP-GalNAc to a serine or threonine residue on the protein receptor. Generates GalNAc-O-Ser/Thr structure also known as Tn antigen, which itself is immunogenic but also serves as a precursor for the synthesis of different mucin-type O-glycan core structures. Contributes to the synthesis of O-linked glycans on mucins and proteoglycans of the central nervous system. Can glycosylate both unmodified peptides and glycopeptides that already contain an O-linked GalNAc sugar. Transfers GalNAc to Thr-/Ser-rich tandem repeats GTTPSPVPTTSTTSAP of MUC5AC. Transfers GalNAc to three consecutive serine/threonine residues on SDC3 forming a triplet-Tn epitope expressed in Purkinje cells of the developing brain. May promote neurogenesis through glycosylation and stabilization of PDPN. This chain is Polypeptide N-acetylgalactosaminyltransferase 13 (Galnt13), found in Rattus norvegicus (Rat).